Consider the following 493-residue polypeptide: uncharacterized protein (493 aa).

Residues 10 to 30 (LVPSTRFALSLVMFFGCLVTY) form a helical membrane-spanning segment. 3 N-linked (GlcNAc...) asparagine glycosylation sites follow: Asn-35, Asn-47, and Asn-69. 6 helical membrane-spanning segments follow: residues 85–105 (MVLSSFFYGYIGSQIIGGHLA), 112–132 (RVVFVTILGSALLTLLNPVAA), 144–164 (AAIGFLQGATFPAMHTMWSVW), 175–195 (GVTYAGAQIGNVIVLPLSGFL), 205–225 (PSIFYIIGVFGVLWTAVWWYV), and 272–292 (AVWACWAGHFAGDWGAYTMLV). N-linked (GlcNAc...) asparagine glycosylation occurs at Asn-305. Transmembrane regions (helical) follow at residues 311-331 (AVASIPYIAYFLAINAGGVLA), 348-368 (AAMLVALIGQGIFLVASGYCG), 375-395 (VIIFITCGMAISGLQYAGFVV), and 406-426 (GTVMGTGNTISALAGIISPAV). An N-linked (GlcNAc...) asparagine glycan is attached at Asn-433. A helical membrane pass occupies residues 441-461 (MVLWLTAGILTIGALLFSIFA).

Belongs to the major facilitator superfamily. Sodium/anion cotransporter family.

It is found in the membrane. This is an uncharacterized protein from Caenorhabditis elegans.